The sequence spans 157 residues: SsrA-binding protein (157 aa).

Belongs to the SmpB family.

It localises to the cytoplasm. In terms of biological role, required for rescue of stalled ribosomes mediated by trans-translation. Binds to transfer-messenger RNA (tmRNA), required for stable association of tmRNA with ribosomes. tmRNA and SmpB together mimic tRNA shape, replacing the anticodon stem-loop with SmpB. tmRNA is encoded by the ssrA gene; the 2 termini fold to resemble tRNA(Ala) and it encodes a 'tag peptide', a short internal open reading frame. During trans-translation Ala-aminoacylated tmRNA acts like a tRNA, entering the A-site of stalled ribosomes, displacing the stalled mRNA. The ribosome then switches to translate the ORF on the tmRNA; the nascent peptide is terminated with the 'tag peptide' encoded by the tmRNA and targeted for degradation. The ribosome is freed to recommence translation, which seems to be the essential function of trans-translation. The sequence is that of SsrA-binding protein from Syntrophomonas wolfei subsp. wolfei (strain DSM 2245B / Goettingen).